The primary structure comprises 423 residues: Acaloleptin A (423 aa).

Residues 1-17 form the signal peptide; sequence MITKISLILFAVLLVSG. The propeptide occupies 18–26; it reads LEEEERWKR. Disordered regions lie at residues 28–58, 108–128, 180–203, and 355–385; these read LQPGAPNVNNNDQPWQVSPHISRDDSGNTKT, INNKDQPWQVSPHISRDDNGN, NVNNKDQPWQVSPHISRDDSGNTR, and SDDEDEEEEEDQPWQLNPNIARGDDGNTRAD. Residues 34-43 show a composition bias toward polar residues; sequence NVNNNDQPWQ. Residues 180–189 show a composition bias toward polar residues; sequence NVNNKDQPWQ. The span at 357 to 366 shows a compositional bias: acidic residues; it reads DEDEEEEEDQ. A compositionally biased stretch (basic and acidic residues) spans 376–385; that stretch reads RGDDGNTRAD.

It belongs to the coleoptericin family. Hemolymph (at protein level). Larval fat body.

Its subcellular location is the secreted. Functionally, acaloleptins A1-A4 show antibacterial activity against Gram-negative bacteria but not against Gram-positive bacteria. Acaloleptin A5 shows antibacterial activity against Gram-positive bacteria but not against Gram-negative bacteria, and may also have antifungal activity. This is Acaloleptin A from Acalolepta luxuriosa (Udo longhorn beetle).